We begin with the raw amino-acid sequence, 193 residues long: MTRVAMAQKTAELIQEFAWPAQPVSPQLQHEVEQFYYREAQLLDHHNYNAWFDLLEQDIHYWMPIRTTRIKRENDKEYIPAGANAHFDENHETMRGRIRQRTSELNWAEDPLSRTRHIVSNVIVRETDTPATLEVASAFLVYRNRLERQVDIFAGERRDVLRRANNGLGFKIARRTILIDQSTILANNLSVFF.

This sequence belongs to the bacterial ring-hydroxylating dioxygenase beta subunit family. As to quaternary structure, heterohexamer consisting of 3 BphA1 subunits and 3 BphA2 subunits. A ferredoxin (BphA3) and a ferredoxin reductase (BphA4) must be present to obtain activity.

It catalyses the reaction biphenyl + NADH + O2 + H(+) = (2R,3S)-3-phenylcyclohexa-3,5-diene-1,2-diol + NAD(+). The protein operates within xenobiotic degradation; biphenyl degradation; 2-hydroxy-2,4-pentadienoate and benzoate from biphenyl: step 1/4. The beta subunit may be responsible for the substrate specificity of the enzyme. This chain is Biphenyl dioxygenase subunit beta (bphA2), found in Pseudomonas sp. (strain KKS102).